We begin with the raw amino-acid sequence, 491 residues long: ATP-dependent protease ATPase subunit HslU (491 aa).

ATP is bound by residues I34, 76 to 81 (GVGKTE), D296, E364, and R436.

This sequence belongs to the ClpX chaperone family. HslU subfamily. A double ring-shaped homohexamer of HslV is capped on each side by a ring-shaped HslU homohexamer. The assembly of the HslU/HslV complex is dependent on binding of ATP.

It localises to the cytoplasm. Its function is as follows. ATPase subunit of a proteasome-like degradation complex; this subunit has chaperone activity. The binding of ATP and its subsequent hydrolysis by HslU are essential for unfolding of protein substrates subsequently hydrolyzed by HslV. HslU recognizes the N-terminal part of its protein substrates and unfolds these before they are guided to HslV for hydrolysis. The sequence is that of ATP-dependent protease ATPase subunit HslU from Chlorobaculum tepidum (strain ATCC 49652 / DSM 12025 / NBRC 103806 / TLS) (Chlorobium tepidum).